Consider the following 769-residue polypeptide: Portal protein (769 aa).

The interval 458–479 (LEGYVNNLFKTIEGLKDVNSDL) is putative leucine zipper motif. 2 disordered regions span residues 654 to 675 (RGPRRTPSPSWGLPDPTEDDER) and 750 to 769 (RQLTNTSRRGVGCERRDRRS). Basic and acidic residues predominate over residues 760 to 769 (VGCERRDRRS).

This sequence belongs to the herpesviridae portal protein family. In terms of assembly, homododecamerizes. Interacts with terminase subunits TRM1 and TRM3.

It localises to the virion. The protein resides in the host nucleus. In terms of biological role, forms a portal in the viral capsid through which viral DNA is translocated during DNA packaging. Assembles as a dodecamer at a single fivefold axe of the T=16 icosahedric capsid. Binds to the molecular motor that translocates the viral DNA, termed terminase. The protein is Portal protein (54) of Homo sapiens (Human).